The primary structure comprises 150 residues: 3-hydroxyacyl-[acyl-carrier-protein] dehydratase FabZ (150 aa).

The active site involves histidine 54.

The protein belongs to the thioester dehydratase family. FabZ subfamily.

The protein localises to the cytoplasm. The catalysed reaction is a (3R)-hydroxyacyl-[ACP] = a (2E)-enoyl-[ACP] + H2O. In terms of biological role, involved in unsaturated fatty acids biosynthesis. Catalyzes the dehydration of short chain beta-hydroxyacyl-ACPs and long chain saturated and unsaturated beta-hydroxyacyl-ACPs. The sequence is that of 3-hydroxyacyl-[acyl-carrier-protein] dehydratase FabZ from Pseudoalteromonas translucida (strain TAC 125).